Reading from the N-terminus, the 330-residue chain is GTPase Obg (330 aa).

Residues 1–159 (MHFIDEVKIY…MWIHLSLKLL (159 aa)) enclose the Obg domain. Residues 160–327 (SDVGLVGLPN…IVKLALETIK (168 aa)) enclose the OBG-type G domain. Residues 166 to 173 (GLPNAGKS), 191 to 195 (FTTLV), 212 to 215 (DIPG), 279 to 282 (NKCD), and 308 to 310 (STC) each bind GTP. The Mg(2+) site is built by S173 and T193.

It belongs to the TRAFAC class OBG-HflX-like GTPase superfamily. OBG GTPase family. As to quaternary structure, monomer. It depends on Mg(2+) as a cofactor.

Its subcellular location is the cytoplasm. In terms of biological role, an essential GTPase which binds GTP, GDP and possibly (p)ppGpp with moderate affinity, with high nucleotide exchange rates and a fairly low GTP hydrolysis rate. Plays a role in control of the cell cycle, stress response, ribosome biogenesis and in those bacteria that undergo differentiation, in morphogenesis control. The sequence is that of GTPase Obg from Rickettsia conorii (strain ATCC VR-613 / Malish 7).